Reading from the N-terminus, the 272-residue chain is Replication-associated protein A (272 aa).

In terms of domain architecture, CRESS-DNA virus Rep endonuclease spans 11 to 114 (SHRNANTFLT…PLAVFERGTF (104 aa)). The short motif at 18 to 21 (FLTY) is the RCR-1 element. Positions 52, 60, and 62 each coordinate a divalent metal cation. Positions 60 to 62 (HLH) match the RCR-2 motif. The active-site For DNA cleavage activity is the Tyr-100. The RCR-3 motif lies at 100–103 (YILK). Glu-104 contacts a divalent metal cation. The interval 175–187 (SANKLFPEIQEEF) is oligomerization. The tract at residues 198–202 (LLCNE) is binding to RBR1. Residues 221 to 230 (MLLQPACYTL) form a transactivation region. Residues 245–272 (SHQMKDQESRASTSSAQQEQENLLGPEA) are disordered. Polar residues predominate over residues 254-265 (RASTSSAQQEQE).

The protein belongs to the geminiviridae Rep protein family. In terms of assembly, homooligomer. Interacts with host retinoblastoma-related protein 1 (RBR1), and may thereby deregulate the host cell cycle. Part of the C- and V-complexes which are RepA-Rep-DNA complexes involved in the c-sense and v-sense transcription. Mg(2+) serves as cofactor. Mn(2+) is required as a cofactor.

The protein localises to the host nucleus. The protein resides in the host cytoplasm. Its function is as follows. Implicated in enhancement of V-sense gene expression. Acts a an inhibitor of C-sense gene transcription. This is Replication-associated protein A from Avena sativa (Oat).